The primary structure comprises 219 residues: Large ribosomal subunit protein uL1 (219 aa).

Belongs to the universal ribosomal protein uL1 family. In terms of assembly, part of the 50S ribosomal subunit.

In terms of biological role, binds directly to 23S rRNA. Probably involved in E site tRNA release. Protein L1 is also a translational repressor protein, it controls the translation of its operon by binding to its mRNA. The sequence is that of Large ribosomal subunit protein uL1 from Pyrococcus horikoshii (strain ATCC 700860 / DSM 12428 / JCM 9974 / NBRC 100139 / OT-3).